A 205-amino-acid polypeptide reads, in one-letter code: Probable peptidyl-tRNA hydrolase 2 (205 aa).

Residues 40–49 are compositionally biased toward polar residues; sequence YSSKNANKAS. A disordered region spans residues 40-68; it reads YSSKNANKASNPEKESPVSVSNDEDSESE. A phosphoserine mark is found at serine 65 and serine 79.

It belongs to the PTH2 family.

It carries out the reaction an N-acyl-L-alpha-aminoacyl-tRNA + H2O = an N-acyl-L-amino acid + a tRNA + H(+). The natural substrate for this enzyme may be peptidyl-tRNAs which drop off the ribosome during protein synthesis. In Schizosaccharomyces pombe (strain 972 / ATCC 24843) (Fission yeast), this protein is Probable peptidyl-tRNA hydrolase 2.